The following is a 472-amino-acid chain: Pyruvate kinase (472 aa).

Position 33 (Arg-33) interacts with substrate. Asn-35, Ser-37, and Asp-67 together coordinate K(+). Residue 35–38 participates in ATP binding; sequence NFSH. The ATP site is built by Arg-74 and Lys-155. Position 220 (Glu-220) interacts with Mg(2+). The substrate site is built by Gly-243, Asp-244, and Thr-276. Mg(2+) is bound at residue Asp-244.

The protein belongs to the pyruvate kinase family. As to quaternary structure, homotetramer. It depends on Mg(2+) as a cofactor. K(+) serves as cofactor.

The enzyme catalyses pyruvate + ATP = phosphoenolpyruvate + ADP + H(+). It participates in carbohydrate degradation; glycolysis; pyruvate from D-glyceraldehyde 3-phosphate: step 5/5. This chain is Pyruvate kinase (pyk), found in Mycobacterium intracellulare.